A 379-amino-acid chain; its full sequence is S-(hydroxymethyl)glutathione dehydrogenase (379 aa).

Cys-47 contributes to the Zn(2+) binding site. His-48 provides a ligand contact to NAD(+). Positions 69, 70, 99, 102, 105, 113, and 176 each coordinate Zn(2+). NAD(+) contacts are provided by residues 201 to 206 (GAGCIG), Asp-225, and 296 to 298 (IGV).

It belongs to the zinc-containing alcohol dehydrogenase family. Class-III subfamily. Requires Zn(2+) as cofactor.

It carries out the reaction a primary alcohol + NAD(+) = an aldehyde + NADH + H(+). The catalysed reaction is a secondary alcohol + NAD(+) = a ketone + NADH + H(+). It catalyses the reaction S-(hydroxymethyl)glutathione + NADP(+) = S-formylglutathione + NADPH + H(+). The enzyme catalyses S-(hydroxymethyl)glutathione + NAD(+) = S-formylglutathione + NADH + H(+). It carries out the reaction S-nitrosoglutathione + NADH + H(+) = S-(hydroxysulfenamide)glutathione + NAD(+). Functionally, oxidizes long-chain alcohols and, in the presence of glutathione, is able to oxidize formaldehyde. Also acts as a S-nitroso-glutathione reductase by catalyzing the NADH-dependent reduction of S-nitrosoglutathione, thereby regulating protein S-nitrosylation. The polypeptide is S-(hydroxymethyl)glutathione dehydrogenase (FLD1) (Komagataella pastoris (Yeast)).